We begin with the raw amino-acid sequence, 92 residues long: uncharacterized protein (92 aa).

3 helical membrane-spanning segments follow: residues 1-21, 30-50, and 62-82; these read MNIYVWLFAIIALSFSALVGL, ANVLVGESIITVVAGTLIVVI, and IALAIFICGVVGAFAFCKVIG.

This sequence to M.thermoautotrophicum MTH1250.

The protein localises to the cell membrane. This is an uncharacterized protein from Methanocaldococcus jannaschii (strain ATCC 43067 / DSM 2661 / JAL-1 / JCM 10045 / NBRC 100440) (Methanococcus jannaschii).